Here is an 87-residue protein sequence, read N- to C-terminus: Small ribosomal subunit protein uS15 (87 aa).

This sequence belongs to the universal ribosomal protein uS15 family. Part of the 30S ribosomal subunit. Forms a bridge to the 50S subunit in the 70S ribosome, contacting the 23S rRNA.

One of the primary rRNA binding proteins, it binds directly to 16S rRNA where it helps nucleate assembly of the platform of the 30S subunit by binding and bridging several RNA helices of the 16S rRNA. Functionally, forms an intersubunit bridge (bridge B4) with the 23S rRNA of the 50S subunit in the ribosome. The chain is Small ribosomal subunit protein uS15 from Pseudothermotoga lettingae (strain ATCC BAA-301 / DSM 14385 / NBRC 107922 / TMO) (Thermotoga lettingae).